The following is a 198-amino-acid chain: Phosphoheptose isomerase (198 aa).

The 163-residue stretch at 34–196 (IVEALIRGNK…DDSLFPADHG (163 aa)) folds into the SIS domain. 49-51 (NGG) is a binding site for substrate. Zn(2+) is bound by residues H58 and N62. Residues N62, 91-92 (ND), 117-119 (STS), S122, and Q172 contribute to the substrate site. Zn(2+)-binding residues include Q172 and H180.

The protein belongs to the SIS family. GmhA subfamily. As to quaternary structure, homotetramer. Zn(2+) is required as a cofactor.

It is found in the cytoplasm. The enzyme catalyses 2 D-sedoheptulose 7-phosphate = D-glycero-alpha-D-manno-heptose 7-phosphate + D-glycero-beta-D-manno-heptose 7-phosphate. Its pathway is carbohydrate biosynthesis; D-glycero-D-manno-heptose 7-phosphate biosynthesis; D-glycero-alpha-D-manno-heptose 7-phosphate and D-glycero-beta-D-manno-heptose 7-phosphate from sedoheptulose 7-phosphate: step 1/1. Its function is as follows. Catalyzes the isomerization of sedoheptulose 7-phosphate in D-glycero-D-manno-heptose 7-phosphate. This is Phosphoheptose isomerase from Alteromonas mediterranea (strain DSM 17117 / CIP 110805 / LMG 28347 / Deep ecotype).